Consider the following 453-residue polypeptide: Probable glycine dehydrogenase (decarboxylating) subunit 1 (453 aa).

It belongs to the GcvP family. N-terminal subunit subfamily. The glycine cleavage system is composed of four proteins: P, T, L and H. In this organism, the P 'protein' is a heterodimer of two subunits.

It catalyses the reaction N(6)-[(R)-lipoyl]-L-lysyl-[glycine-cleavage complex H protein] + glycine + H(+) = N(6)-[(R)-S(8)-aminomethyldihydrolipoyl]-L-lysyl-[glycine-cleavage complex H protein] + CO2. Functionally, the glycine cleavage system catalyzes the degradation of glycine. The P protein binds the alpha-amino group of glycine through its pyridoxal phosphate cofactor; CO(2) is released and the remaining methylamine moiety is then transferred to the lipoamide cofactor of the H protein. The sequence is that of Probable glycine dehydrogenase (decarboxylating) subunit 1 from Nitrosomonas europaea (strain ATCC 19718 / CIP 103999 / KCTC 2705 / NBRC 14298).